Reading from the N-terminus, the 342-residue chain is Ferrochelatase (342 aa).

Positions 188 and 268 each coordinate Fe cation.

It belongs to the ferrochelatase family.

It localises to the cytoplasm. The catalysed reaction is heme b + 2 H(+) = protoporphyrin IX + Fe(2+). The protein operates within porphyrin-containing compound metabolism; protoheme biosynthesis; protoheme from protoporphyrin-IX: step 1/1. Functionally, catalyzes the ferrous insertion into protoporphyrin IX. This is Ferrochelatase from Rickettsia prowazekii (strain Madrid E).